The sequence spans 178 residues: Interleukin-10 (178 aa).

An N-terminal signal peptide occupies residues 1 to 18 (MHSSALLCCLVFLTGVRA). Intrachain disulfides connect C30/C126 and C80/C132. N-linked (GlcNAc...) asparagine glycosylation is present at N134.

This sequence belongs to the IL-10 family. As to quaternary structure, homodimer. Interacts with IL10RA and IL10RB.

It is found in the secreted. Its function is as follows. Major immune regulatory cytokine that acts on many cells of the immune system where it has profound anti-inflammatory functions, limiting excessive tissue disruption caused by inflammation. Mechanistically, IL10 binds to its heterotetrameric receptor comprising IL10RA and IL10RB leading to JAK1 and STAT2-mediated phosphorylation of STAT3. In turn, STAT3 translocates to the nucleus where it drives expression of anti-inflammatory mediators. Targets antigen-presenting cells (APCs) such as macrophages and monocytes and inhibits their release of pro-inflammatory cytokines including granulocyte-macrophage colony-stimulating factor /GM-CSF, granulocyte colony-stimulating factor/G-CSF, IL-1 alpha, IL-1 beta, IL-6, IL-8 and TNF-alpha. Also interferes with antigen presentation by reducing the expression of MHC-class II and co-stimulatory molecules, thereby inhibiting their ability to induce T cell activation. In addition, controls the inflammatory response of macrophages by reprogramming essential metabolic pathways including mTOR signaling. This is Interleukin-10 (IL10) from Callithrix jacchus (White-tufted-ear marmoset).